Consider the following 563-residue polypeptide: Phospholipase B-like protein F (563 aa).

An N-terminal signal peptide occupies residues 1-21 (MKIINSFVFIFVLLFVFNTNA). N-linked (GlcNAc...) asparagine glycans are attached at residues asparagine 85, asparagine 107, asparagine 118, asparagine 121, asparagine 208, asparagine 312, and asparagine 537.

This sequence belongs to the phospholipase B-like family.

Its subcellular location is the secreted. Functionally, probable phospholipase. In Dictyostelium discoideum (Social amoeba), this protein is Phospholipase B-like protein F (plbF).